The sequence spans 272 residues: MLSTKSVTQKYIEHHLSNLQFDLKNLTLVQSHENMSFWVLNIDSLFFSVLLCLLFLVIAGFVAKYSTVSVPGKLQAFVELIISFVDGCVKDMFHGTSKLISPLSMTVFVWIILMNSMDLIPIDLLPCIADYFFGIPTLRILPSADINITCAMALNIFALMIFYYIKTNGIIGFVSSLIYHPFNYSLCIPINFLLEIISLCSKPVSLSLRLFGNMYSGELIFILIAGFLPWWSQWMLSVPWAIFHILIIILQAFIFMVLTIIYLSESHYEYKP.

6 helical membrane-spanning segments follow: residues 42–62 (IDSL…AGFV), 108–128 (FVWI…LPCI), 140–162 (ILPS…LMIF), 177–197 (LIYH…LEII), 219–239 (LIFI…LSVP), and 241–261 (AIFH…LTII).

This sequence belongs to the ATPase A chain family. As to quaternary structure, F-type ATPases have 2 components, CF(1) - the catalytic core - and CF(0) - the membrane proton channel. CF(1) has five subunits: alpha(3), beta(3), gamma(1), delta(1), epsilon(1). CF(0) has three main subunits: a(1), b(2) and c(9-12). The alpha and beta chains form an alternating ring which encloses part of the gamma chain. CF(1) is attached to CF(0) by a central stalk formed by the gamma and epsilon chains, while a peripheral stalk is formed by the delta and b chains.

The protein resides in the cell inner membrane. Key component of the proton channel; it plays a direct role in the translocation of protons across the membrane. The chain is ATP synthase subunit a from Blochmanniella floridana.